The sequence spans 212 residues: Acyl-homoserine-lactone synthase (212 aa).

The protein belongs to the autoinducer synthase family.

The catalysed reaction is a fatty acyl-[ACP] + S-adenosyl-L-methionine = an N-acyl-L-homoserine lactone + S-methyl-5'-thioadenosine + holo-[ACP] + H(+). Functionally, required for the synthesis of OHHL (N-(3-oxohexanoyl)-L-homoserine lactone), an autoinducer molecule which binds to ExpR and thus acts in virulence (soft rot disease) through the activation of genes for plant tissue macerating enzymes. In Dickeya dadantii (strain 3937) (Erwinia chrysanthemi (strain 3937)), this protein is Acyl-homoserine-lactone synthase (expI).